A 357-amino-acid polypeptide reads, in one-letter code: Probable nitronate monooxygenase (357 aa).

Residues N71, Q175, G180, G219, and 238–241 (QMGT) contribute to the FMN site.

It belongs to the nitronate monooxygenase family. NMO class I subfamily. Requires FMN as cofactor.

The enzyme catalyses 3 propionate 3-nitronate + 3 O2 + H2O = 3 3-oxopropanoate + 2 nitrate + nitrite + H2O2 + 3 H(+). Nitronate monooxygenase that uses molecular oxygen to catalyze the oxidative denitrification of alkyl nitronates. Acts on propionate 3-nitronate (P3N), the presumed physiological substrate. Probably functions in the detoxification of P3N, a metabolic poison produced by plants and fungi as a defense mechanism. This Staphylococcus haemolyticus (strain JCSC1435) protein is Probable nitronate monooxygenase.